An 892-amino-acid chain; its full sequence is Polyribonucleotide nucleotidyltransferase (892 aa).

Positions 407–427 (YMHNYEMPPYSTGETGRVGSP) are disordered. The Mg(2+) site is built by D521 and D527. The KH domain occupies 587-646 (PRIITTTVPVDKIGEVIGPKGKMINQIQEDTGAEIAIEDDGTVYISSEGGEAAEKAKEII). The S1 motif domain occupies 658-730 (GETYNGKVVK…DRGKISLAIP (73 aa)). The interval 727-892 (LAIPGFEDQE…VRRDFDPFED (166 aa)) is disordered. 2 stretches are compositionally biased toward basic and acidic residues: residues 739–844 (APRR…DRRS) and 851–877 (RRDDRNPRYAADENYDEYRADREERSE).

It belongs to the polyribonucleotide nucleotidyltransferase family. Mg(2+) serves as cofactor.

It localises to the cytoplasm. The catalysed reaction is RNA(n+1) + phosphate = RNA(n) + a ribonucleoside 5'-diphosphate. In terms of biological role, involved in mRNA degradation. Catalyzes the phosphorolysis of single-stranded polyribonucleotides processively in the 3'- to 5'-direction. The polypeptide is Polyribonucleotide nucleotidyltransferase (Bifidobacterium adolescentis (strain ATCC 15703 / DSM 20083 / NCTC 11814 / E194a)).